The chain runs to 299 residues: Cathepsin B-like CP3 (299 aa).

An N-terminal signal peptide occupies residues 1 to 19; that stretch reads MKLFLLAAAAFSAPALTVS. 3 disulfide bridges follow: cysteine 87–cysteine 114, cysteine 97–cysteine 140, and cysteine 133–cysteine 176. Residue cysteine 100 is part of the active site. Residues histidine 244 and asparagine 265 contribute to the active site.

This sequence belongs to the peptidase C1 family.

The protein resides in the vacuole. Functionally, thiol protease which is required for parasite excystation and invasion of the proximal small intestine of the human host. This Giardia intestinalis (Giardia lamblia) protein is Cathepsin B-like CP3 (CP3).